The following is a 203-amino-acid chain: Ribosome maturation factor RimP (203 aa).

The tract at residues 184–203 (RRGSAPVEDEEGEGEAPTAH) is disordered.

Belongs to the RimP family.

The protein resides in the cytoplasm. Required for maturation of 30S ribosomal subunits. This chain is Ribosome maturation factor RimP, found in Methylobacterium nodulans (strain LMG 21967 / CNCM I-2342 / ORS 2060).